A 299-amino-acid polypeptide reads, in one-letter code: MPWLQLRINTTRELAPRVEYAMAKSGSLAVTLQDNADHPIFEPALGETPLWQETRIVGLFEADTDTTAILELVLKKSGLSEAQHQWHILEDKDWEREWMTHYQPIQCGPGFWICPSWTAPPDPQAVNLMLDPGLAFGTGTHPTTFLCLQWLAGENLANKTVIDYGCGSGILGIGALLLGAVSVTGTDIDPQALMATQENVKRNNLPAESFPVYFPDKCPENPVDIVLANILAGPLVELAPALSALLKPGGRLCLSGVLETQKDDLLAAYEPTVEIEQVFQREEWICITGTRRALKSAKE.

S-adenosyl-L-methionine contacts are provided by T144, G165, D187, and N229.

The protein belongs to the methyltransferase superfamily. PrmA family.

The protein localises to the cytoplasm. The catalysed reaction is L-lysyl-[protein] + 3 S-adenosyl-L-methionine = N(6),N(6),N(6)-trimethyl-L-lysyl-[protein] + 3 S-adenosyl-L-homocysteine + 3 H(+). In terms of biological role, methylates ribosomal protein L11. This is Ribosomal protein L11 methyltransferase from Teredinibacter turnerae (strain ATCC 39867 / T7901).